The following is a 527-amino-acid chain: 4-alpha-glucanotransferase (527 aa).

The protein belongs to the disproportionating enzyme family.

The protein localises to the cytoplasm. The enzyme catalyses Transfers a segment of a (1-&gt;4)-alpha-D-glucan to a new position in an acceptor, which may be glucose or a (1-&gt;4)-alpha-D-glucan.. The protein is 4-alpha-glucanotransferase (malQ) of Chlamydia trachomatis serovar D (strain ATCC VR-885 / DSM 19411 / UW-3/Cx).